The sequence spans 305 residues: Aspartate carbamoyltransferase catalytic subunit (305 aa).

Arg-54 and Thr-55 together coordinate carbamoyl phosphate. Lys-83 provides a ligand contact to L-aspartate. The carbamoyl phosphate site is built by Arg-104, His-132, and Gln-135. Positions 165 and 226 each coordinate L-aspartate. Residues Leu-265 and Pro-266 each contribute to the carbamoyl phosphate site.

This sequence belongs to the aspartate/ornithine carbamoyltransferase superfamily. ATCase family. As to quaternary structure, heterooligomer of catalytic and regulatory chains.

It carries out the reaction carbamoyl phosphate + L-aspartate = N-carbamoyl-L-aspartate + phosphate + H(+). It participates in pyrimidine metabolism; UMP biosynthesis via de novo pathway; (S)-dihydroorotate from bicarbonate: step 2/3. Catalyzes the condensation of carbamoyl phosphate and aspartate to form carbamoyl aspartate and inorganic phosphate, the committed step in the de novo pyrimidine nucleotide biosynthesis pathway. The chain is Aspartate carbamoyltransferase catalytic subunit from Pyrobaculum calidifontis (strain DSM 21063 / JCM 11548 / VA1).